We begin with the raw amino-acid sequence, 286 residues long: tRNA pseudouridine synthase A (286 aa).

Catalysis depends on Asp60, which acts as the Nucleophile. Tyr132 is a substrate binding site.

It belongs to the tRNA pseudouridine synthase TruA family. As to quaternary structure, homodimer.

The catalysed reaction is uridine(38/39/40) in tRNA = pseudouridine(38/39/40) in tRNA. Its function is as follows. Formation of pseudouridine at positions 38, 39 and 40 in the anticodon stem and loop of transfer RNAs. The polypeptide is tRNA pseudouridine synthase A (Mycobacterium leprae (strain TN)).